Reading from the N-terminus, the 955-residue chain is Auxin response factor 11 (955 aa).

The segment at residues Phe-143–Thr-245 is a DNA-binding region (TF-B3). Residues Glu-518–Asn-543 are compositionally biased toward polar residues. 2 disordered regions span residues Glu-518–Ala-573 and Thr-609–Asn-646. A compositionally biased stretch (basic residues) spans Lys-551–Pro-560. The 85-residue stretch at Arg-852–Glu-936 folds into the PB1 domain.

This sequence belongs to the ARF family. Homodimers and heterodimers.

The protein localises to the nucleus. Its function is as follows. Auxin response factors (ARFs) are transcriptional factors that bind specifically to the DNA sequence 5'-TGTCTC-3' found in the auxin-responsive promoter elements (AuxREs). This Oryza sativa subsp. indica (Rice) protein is Auxin response factor 11 (ARF11).